The chain runs to 184 residues: Small ribosomal subunit protein uS7 (184 aa).

Belongs to the universal ribosomal protein uS7 family. As to quaternary structure, part of the 30S ribosomal subunit.

One of the primary rRNA binding proteins, it binds directly to 16S rRNA where it nucleates assembly of the head domain of the 30S subunit. Is located at the subunit interface close to the decoding center. The sequence is that of Small ribosomal subunit protein uS7 from Thermoplasma volcanium (strain ATCC 51530 / DSM 4299 / JCM 9571 / NBRC 15438 / GSS1).